The sequence spans 212 residues: Protein HP-25 homolog 1 (212 aa).

The first 34 residues, 1–34 (MPGGRRRVGSMNIAGFWILAQFVLLLVANVKSSA), serve as a signal peptide directing secretion. The segment at 36 to 66 (SELCGPRGARGPPGLSGLPGPPGYTGPIGMP) is disordered. The segment covering 40–53 (GPRGARGPPGLSGL) has biased composition (low complexity). The Collagen-like domain occupies 40-76 (GPRGARGPPGLSGLPGPPGYTGPIGMPGLTGRPGLPG). In terms of domain architecture, C1q spans 82 to 212 (PPLPQSAFSV…VFYGFLLNGN (131 aa)). N-linked (GlcNAc...) asparagine glycosylation occurs at Asn125.

Its subcellular location is the secreted. The sequence is that of Protein HP-25 homolog 1 from Bos taurus (Bovine).